The chain runs to 704 residues: Acetyl-coenzyme A synthetase 1 (704 aa).

CoA is bound by residues 239 to 242 (RGGK) and Thr-358. ATP is bound by residues 434 to 436 (GEP), 458 to 463 (DTYWQT), Asp-550, and Arg-565. Ser-573 lines the CoA pocket. Arg-576 serves as a coordination point for ATP. A CoA-binding site is contributed by Arg-641. The short motif at 702–704 (VKL) is the Microbody targeting signal element.

It belongs to the ATP-dependent AMP-binding enzyme family.

It is found in the microsome. The protein resides in the endoplasmic reticulum. It catalyses the reaction acetate + ATP + CoA = acetyl-CoA + AMP + diphosphate. This Candida glabrata (strain ATCC 2001 / BCRC 20586 / JCM 3761 / NBRC 0622 / NRRL Y-65 / CBS 138) (Yeast) protein is Acetyl-coenzyme A synthetase 1 (ACS1).